Here is a 227-residue protein sequence, read N- to C-terminus: Cytochrome c oxidase subunit 2 (227 aa).

Topologically, residues 1 to 14 (MAYPLQLGLQDASS) are mitochondrial intermembrane. A helical transmembrane segment spans residues 15–45 (PIMEELMNFHDHTLMIVFLISSLVLYLISLM). Topologically, residues 46–59 (LTTKLIHTSTMDAQ) are mitochondrial matrix. The helical transmembrane segment at 60–87 (EVETVWTILPAIILILIALPSLRILYMM) threads the bilayer. At 88–227 (DEINNPVLTV…LFENWSLSLT (140 aa)) the chain is on the mitochondrial intermembrane side. Cu cation-binding residues include H161, C196, E198, C200, H204, and M207. E198 contacts Mg(2+).

It belongs to the cytochrome c oxidase subunit 2 family. Component of the cytochrome c oxidase (complex IV, CIV), a multisubunit enzyme composed of 14 subunits. The complex is composed of a catalytic core of 3 subunits MT-CO1, MT-CO2 and MT-CO3, encoded in the mitochondrial DNA, and 11 supernumerary subunits COX4I, COX5A, COX5B, COX6A, COX6B, COX6C, COX7A, COX7B, COX7C, COX8 and NDUFA4, which are encoded in the nuclear genome. The complex exists as a monomer or a dimer and forms supercomplexes (SCs) in the inner mitochondrial membrane with NADH-ubiquinone oxidoreductase (complex I, CI) and ubiquinol-cytochrome c oxidoreductase (cytochrome b-c1 complex, complex III, CIII), resulting in different assemblies (supercomplex SCI(1)III(2)IV(1) and megacomplex MCI(2)III(2)IV(2)). Found in a complex with TMEM177, COA6, COX18, COX20, SCO1 and SCO2. Interacts with TMEM177 in a COX20-dependent manner. Interacts with COX20. Interacts with COX16. It depends on Cu cation as a cofactor.

The protein localises to the mitochondrion inner membrane. The catalysed reaction is 4 Fe(II)-[cytochrome c] + O2 + 8 H(+)(in) = 4 Fe(III)-[cytochrome c] + 2 H2O + 4 H(+)(out). Its function is as follows. Component of the cytochrome c oxidase, the last enzyme in the mitochondrial electron transport chain which drives oxidative phosphorylation. The respiratory chain contains 3 multisubunit complexes succinate dehydrogenase (complex II, CII), ubiquinol-cytochrome c oxidoreductase (cytochrome b-c1 complex, complex III, CIII) and cytochrome c oxidase (complex IV, CIV), that cooperate to transfer electrons derived from NADH and succinate to molecular oxygen, creating an electrochemical gradient over the inner membrane that drives transmembrane transport and the ATP synthase. Cytochrome c oxidase is the component of the respiratory chain that catalyzes the reduction of oxygen to water. Electrons originating from reduced cytochrome c in the intermembrane space (IMS) are transferred via the dinuclear copper A center (CU(A)) of subunit 2 and heme A of subunit 1 to the active site in subunit 1, a binuclear center (BNC) formed by heme A3 and copper B (CU(B)). The BNC reduces molecular oxygen to 2 water molecules using 4 electrons from cytochrome c in the IMS and 4 protons from the mitochondrial matrix. The sequence is that of Cytochrome c oxidase subunit 2 (MT-CO2) from Taterillus emini (Emin's gerbil).